Reading from the N-terminus, the 460-residue chain is Decaprenylphosphoryl-beta-D-ribose oxidase (460 aa).

The region spanning 19–193 (TAPTVASVLS…LRATIEMTPT (175 aa)) is the FAD-binding PCMH-type domain. FAD contacts are provided by residues 52–62 (ARGLGRSYGDN), glycine 116, 121–124 (TVGG), 128–131 (CDIH), isoleucine 183, and tyrosine 414.

It belongs to the DprE1 family. Monomer. Interacts with DprE2 to form an epimerase complex.

Its subcellular location is the periplasm. It catalyses the reaction trans,octa-cis-decaprenylphospho-beta-D-ribofuranose + FAD + H(+) = trans,octa-cis-decaprenylphospho-beta-D-erythro-pentofuranosid-2-ulose + FADH2. Its pathway is cell wall biogenesis; cell wall polysaccharide biosynthesis. With respect to regulation, is inhibited by 8-nitro-benzothiazinones (BTZs) such as BTZ043; BTZs are a new class of antimycobacterial agents that block formation of both cell-wall lipoarabinomannan and arabinogalactan via inhibition of decaprenyl-phospho-arabinose (DPA) synthesis. BTZs are suicide inhibitors that act via covalent modification of DprE1; the essential nitro group of these compounds is reduced by DprE1 to a nitroso group, which then specifically reacts with Cys-386 of DprE1 to form an irreversible semimercaptal adduct. Other compounds with diverse scaffolds (dinitrobenzamides and nitrobenzoquinoxalines) also act as covalent DprE1 inhibitors. Its function is as follows. Component of the DprE1-DprE2 complex that catalyzes the 2-step epimerization of decaprenyl-phospho-ribose (DPR) to decaprenyl-phospho-arabinose (DPA), a key precursor that serves as the arabinose donor required for the synthesis of cell-wall arabinans. DprE1 catalyzes the first step of epimerization, namely FAD-dependent oxidation of the C2' hydroxyl of DPR to yield the keto intermediate decaprenyl-phospho-2'-keto-D-arabinose (DPX). The intermediate DPX is then transferred to DprE2 subunit of the epimerase complex, most probably through a 'substrate channel' at the interface of DprE1-DprE2 complex. Can also use farnesyl-phosphoryl-beta-D-ribofuranose (FPR) as substrate in vitro. Appears to be essential for the growth of M.smegmatis. The sequence is that of Decaprenylphosphoryl-beta-D-ribose oxidase from Mycolicibacterium smegmatis (strain ATCC 700084 / mc(2)155) (Mycobacterium smegmatis).